A 567-amino-acid chain; its full sequence is Dihydroxy-acid dehydratase (567 aa).

[2Fe-2S] cluster is bound at residue Cys52. Asp84 is a Mg(2+) binding site. Cys125 provides a ligand contact to [2Fe-2S] cluster. Asp126 and Lys127 together coordinate Mg(2+). Lys127 bears the N6-carboxylysine mark. Cys197 is a [2Fe-2S] cluster binding site. A Mg(2+)-binding site is contributed by Glu448. Catalysis depends on Ser474, which acts as the Proton acceptor.

This sequence belongs to the IlvD/Edd family. As to quaternary structure, homodimer. The cofactor is [2Fe-2S] cluster. It depends on Mg(2+) as a cofactor.

The catalysed reaction is (2R)-2,3-dihydroxy-3-methylbutanoate = 3-methyl-2-oxobutanoate + H2O. It catalyses the reaction (2R,3R)-2,3-dihydroxy-3-methylpentanoate = (S)-3-methyl-2-oxopentanoate + H2O. The protein operates within amino-acid biosynthesis; L-isoleucine biosynthesis; L-isoleucine from 2-oxobutanoate: step 3/4. It functions in the pathway amino-acid biosynthesis; L-valine biosynthesis; L-valine from pyruvate: step 3/4. Functions in the biosynthesis of branched-chain amino acids. Catalyzes the dehydration of (2R,3R)-2,3-dihydroxy-3-methylpentanoate (2,3-dihydroxy-3-methylvalerate) into 2-oxo-3-methylpentanoate (2-oxo-3-methylvalerate) and of (2R)-2,3-dihydroxy-3-methylbutanoate (2,3-dihydroxyisovalerate) into 2-oxo-3-methylbutanoate (2-oxoisovalerate), the penultimate precursor to L-isoleucine and L-valine, respectively. The sequence is that of Dihydroxy-acid dehydratase from Streptococcus pneumoniae (strain CGSP14).